Here is a 1019-residue protein sequence, read N- to C-terminus: MYILVWKEGQQIRTFQDLEECGQFQTASNITDGQIFSINVTPTMSKGGETGETQLRRLMYLSASTEPEKCYAEYLADMAHVATLRNKQIGVSGFLLYSSPFFFEVIEGTDEELDFLFAKISADPRHVRCIVLANGPCTGRLYGEWHMKDSHIDNITKHPAIKTILFQIARSFSCMWSYLPKNAANMLLLGKNPNKQAPEPMSVVVTFIYLVEFSSILAHPGQTEQCADILAAFVDACVRNVEGTGAQVAKFITGICIAYWPINRAEDALIGLQQLSEDLAELRSQQRPGSALSLIYSRCGVHYGRALLCNAGFRKADFTLLGDCINTASRITSLSVKLKVPLLLSFEVRCVLGDEMREVLETSGLHKVKGRDQPVQVYQFNARELDSAMVRAKIEQLNPGSYRALCPVKPYESLLPAQRPPIFDDTPRENQPKLSQVQRRDSLVDRLSLIAKLAFPTSMMAGGEGQLITLTYISQAAHPMTRLDLASIQRIAFARNESSNITGSLLHVSGLFVQTLEGPKGAVVSLYLKIRQDKRHKDVVADFMAPSEGREYGSPLDMTSATEEMLTSFPPLQELLTHLAKPFISLETYVPTTVVRYLTAGNNPRNLQPVSVEVVLLATDICSFTPLSEKCSLTEVWTICKTIFVAFIRAIFNEGGEVIKLIGDCVTAYFPPTGADKAVHACQEIVTFCAQLGDAFHDVLDCRSVVACGVGLDFGQVIMAQCGSLGMTEFVVAGEVSARVMEVVALTREAGRAIVITEPLPDRLAPKLRDTGIIPCQEGVDGVPCYGNLGPEWELDVATIKKNIYGFHDARALAAMKKVDVGTNAPGRGAPAGGIPSSPKVRPPGRTNSVSSYTPDPNEALDPPMAESVFLDMCHQRGDTANNSIAVKLRQAANDDRLDLGRMLQGPHELMPVMQAIKHLTNLRMLNMSDNFVVDNNVGELVESCIPMRSLQVLDLSNNPGLTKVIALKRLIKHNTQVREFLLNGTRIAPTEQRKLQSSMNVNRLCASTDLKGSHKYEH.

The BLUF 1 domain occupies 55 to 148 (LRRLMYLSAS…GRLYGEWHMK (94 aa)). A Guanylate cyclase 1 domain is found at 204–332 (VVTFIYLVEF…DCINTASRIT (129 aa)). One can recognise a BLUF 2 domain in the interval 467–559 (LITLTYISQA…REYGSPLDMT (93 aa)). One can recognise a Guanylate cyclase 2 domain in the interval 615–744 (VLLATDICSF…EVSARVMEVV (130 aa)). The segment covering 825–839 (APGRGAPAGGIPSSP) has biased composition (low complexity). Residues 825-862 (APGRGAPAGGIPSSPKVRPPGRTNSVSSYTPDPNEALD) form a disordered region. Residues 846–855 (RTNSVSSYTP) show a composition bias toward polar residues.

It belongs to the adenylyl cyclase class-4/guanylyl cyclase family. Heterotetramer of two alpha and two beta subunits.

It is found in the cell projection. The protein localises to the cilium. It localises to the flagellum. The protein is Photoactivated adenylate cyclase subunit alpha-like protein FB of Euglena gracilis.